Consider the following 301-residue polypeptide: Probable alpha-L-glutamate ligase (301 aa).

One can recognise an ATP-grasp domain in the interval 104 to 287 (LQLLSRRGIG…VAGMIIEHLE (184 aa)). Residues Lys141, 178 to 179 (EY), Asp187, and 211 to 213 (RSN) each bind ATP. 3 residues coordinate Mg(2+): Asp248, Glu260, and Asn262. Asp248, Glu260, and Asn262 together coordinate Mn(2+).

This sequence belongs to the RimK family. The cofactor is Mg(2+). Mn(2+) is required as a cofactor.

In Pseudomonas entomophila (strain L48), this protein is Probable alpha-L-glutamate ligase.